The following is a 172-amino-acid chain: Protein PLASTID REDOX INSENSITIVE 2, chloroplastic (172 aa).

A chloroplast-targeting transit peptide spans Met-1 to Arg-54.

The protein resides in the plastid. It localises to the chloroplast stroma. The protein localises to the chloroplast nucleoid. Required for the activity of the plastid-encoded RNA polymerase (PEP) and full expression of genes transcribed by PEP. This is Protein PLASTID REDOX INSENSITIVE 2, chloroplastic from Oryza sativa subsp. japonica (Rice).